The primary structure comprises 342 residues: Holliday junction branch migration complex subunit RuvB (342 aa).

A large ATPase domain (RuvB-L) region spans residues 1–179; the sequence is MTNILSPEKS…FGIPMRLNFY (179 aa). Residues Ile18, Arg19, Gly60, Lys63, Thr64, Thr65, 126-128, Arg169, Tyr179, and Arg216 each bind ATP; that span reads EDF. Mg(2+) is bound at residue Thr64. A small ATPAse domain (RuvB-S) region spans residues 180–250; the sequence is NTEELKQVLN…ICDFGLKRLT (71 aa). Positions 253–342 are head domain (RuvB-H); it reads SIGLDSNDYR…NQLNILNENE (90 aa). Arg289, Arg308, and Arg313 together coordinate DNA.

The protein belongs to the RuvB family. Homohexamer. Forms an RuvA(8)-RuvB(12)-Holliday junction (HJ) complex. HJ DNA is sandwiched between 2 RuvA tetramers; dsDNA enters through RuvA and exits via RuvB. An RuvB hexamer assembles on each DNA strand where it exits the tetramer. Each RuvB hexamer is contacted by two RuvA subunits (via domain III) on 2 adjacent RuvB subunits; this complex drives branch migration. In the full resolvosome a probable DNA-RuvA(4)-RuvB(12)-RuvC(2) complex forms which resolves the HJ.

Its subcellular location is the cytoplasm. The enzyme catalyses ATP + H2O = ADP + phosphate + H(+). Participates in UV-tolerance of Synechocystis PCC 6803. Functionally, the RuvA-RuvB-RuvC complex processes Holliday junction (HJ) DNA during genetic recombination and DNA repair, while the RuvA-RuvB complex plays an important role in the rescue of blocked DNA replication forks via replication fork reversal (RFR). RuvA specifically binds to HJ cruciform DNA, conferring on it an open structure. The RuvB hexamer acts as an ATP-dependent pump, pulling dsDNA into and through the RuvAB complex. RuvB forms 2 homohexamers on either side of HJ DNA bound by 1 or 2 RuvA tetramers; 4 subunits per hexamer contact DNA at a time. Coordinated motions by a converter formed by DNA-disengaged RuvB subunits stimulates ATP hydrolysis and nucleotide exchange. Immobilization of the converter enables RuvB to convert the ATP-contained energy into a lever motion, pulling 2 nucleotides of DNA out of the RuvA tetramer per ATP hydrolyzed, thus driving DNA branch migration. The RuvB motors rotate together with the DNA substrate, which together with the progressing nucleotide cycle form the mechanistic basis for DNA recombination by continuous HJ branch migration. Branch migration allows RuvC to scan DNA until it finds its consensus sequence, where it cleaves and resolves cruciform DNA. The polypeptide is Holliday junction branch migration complex subunit RuvB (Rickettsia prowazekii (strain Madrid E)).